Consider the following 446-residue polypeptide: Probable rhamnogalacturonase A (446 aa).

The first 18 residues, 1-18 (MPALPILALALAPLLVNG), serve as a signal peptide directing secretion. A disulfide bridge links Cys39 with Cys65. Asn50, Asn115, and Asn124 each carry an N-linked (GlcNAc...) asparagine glycan. The active-site Proton donor is the Asp216. A disulfide bridge connects residues Cys218 and Cys235. Residues Asn236 and Asn281 are each glycosylated (N-linked (GlcNAc...) asparagine). The active site involves His291. N-linked (GlcNAc...) asparagine glycosylation is present at Asn318. 2 disulfide bridges follow: Cys341–Cys347 and Cys369–Cys378.

The protein belongs to the glycosyl hydrolase 28 family.

The protein localises to the secreted. It catalyses the reaction Endohydrolysis of alpha-D-GalA-(1-&gt;2)-alpha-L-Rha glycosidic bond in the rhamnogalacturonan I backbone with initial inversion of anomeric configuration releasing oligosaccharides with beta-D-GalA at the reducing end.. Functionally, pectinolytic enzymes consist of four classes of enzymes: pectine lyase, polygalacturonase, pectin methylesterase and rhamnogalacturonase. Hydrolyzes alpha-D-galacturonopyranosyl-(1,2)-alpha-L-rhamnopyranosyl linkages in the backbone of the hairy regions of pectins. The sequence is that of Probable rhamnogalacturonase A (rhgA) from Aspergillus niger (strain ATCC MYA-4892 / CBS 513.88 / FGSC A1513).